The primary structure comprises 957 residues: MKKFFDSRREQGGSGLGSGSSGGGGSTSGLGSGYIGRVFGIGRQQVTVDEVLAEGGFAIVFLVRTSNGMKCALKRMFVNNEHDLQVCKREIQIMRDLSGHKNIVGYIDSSINSVSSGDVWEVLILMDFCRGGQVVNLMNQRLQTGFTENEVLQIFCDTCEAVARLHQCKTPIIHRDLKVENILLHDRGHYVLCDFGSATNKFQNPQTEGVNAVEDEIKKYTTLSYRAPEMVNLYSGKVITTKADIWALGCLLYKLCYFTLPFGESQVAICDGNFTIPDNSRYSQDMHCLIRYMLEPDPDKRPDIYQVSYFSFKLLKKECPIPNVQNSPIPTKLPEPVKASEAAAKKTQPKARLTDPIPTTETSIAPRQRPKAGQTQPNPGILPIQPALTPRKRATVQPPPQAAGSSNQPGLLASVPQPKTQPPPSQPLPQSQPKQPQAPPTSQQPPSAPAQALPTQAQATPQHQQQLFLKQQQQQQTAPPAQQPAGTFYQQPQQQAQAPQFQAVHPAAQQPVIAQFPVVSQGSSQQQLIQNFYQQQQQQQQLATALHQQQLLTQQAALQQKTTAAAAPQPQAQPAAAASPAPAQEPAQIQAPVRQQPKVQTTPPPTIQGQKLGSLTPPSSPKAQRAGHRRILSDVTHSAVFGVPASKSTQLLQAAAAEASLNKSKSATTTPSGSPRASQQNVYNPSEGSTWNPFDDDNFSKLTAEELLNKDFAKLGEGKYPEKLGGSAESLIPGFQPTQGDAFAASSFSAGTAEKRKGGQTMDSSLPLLSVSDPFIPLQVPDAPEKLIEGLKSPDTSLLLPDLLPMTDPFGSTSDAVIEKADVAVESLIPGLEPPVPQRLPSQTESVTSNRTDSLTGEDSLIDCSLLSNPTTDLLEEFAPIAISAPAHKAAEDSNLISGFDVPEGSDKVAEDEFDPIPVLITKNPQGGHSRNSSGSSESSLPNLARSLLLVDQLIDL.

M1 is modified (N-acetylmethionine). Positions 1 to 11 (MKKFFDSRREQ) are enriched in basic and acidic residues. The segment at 1–25 (MKKFFDSRREQGGSGLGSGSSGGGG) is disordered. Positions 12–25 (GGSGLGSGSSGGGG) are enriched in gly residues. The residue at position 14 (S14) is a Phosphoserine. The Protein kinase domain occupies 46–315 (VTVDEVLAEG…QVSYFSFKLL (270 aa)). Residues 52–60 (LAEGGFAIV) and K74 each bind ATP. D176 (proton acceptor) is an active-site residue. Phosphotyrosine is present on Y234. S235 is modified (phosphoserine). 2 disordered regions span residues 326 to 506 (NSPI…AVHP) and 563 to 629 (TAAA…AGHR). Phosphothreonine is present on residues T354 and T389. An Omega-N-methylarginine modification is found at R391. Positions 436–448 (PQAPPTSQQPPSA) are enriched in pro residues. The residue at position 441 (T441) is a Phosphothreonine. Composition is skewed to low complexity over residues 449 to 506 (PAQA…AVHP) and 563 to 601 (TAAA…KVQT). T602 bears the Phosphothreonine mark. Positions 607-617 (IQGQKLGSLTP) are enriched in polar residues. S614 is modified (phosphoserine). T616 carries the phosphothreonine modification. Phosphoserine is present on residues S619, S620, S633, and S646. Position 649 is a phosphothreonine (T649). Positions 660 to 697 (SLNKSKSATTTPSGSPRASQQNVYNPSEGSTWNPFDDD) are disordered. Polar residues predominate over residues 668-692 (TTTPSGSPRASQQNVYNPSEGSTWN). Phosphotyrosine is present on Y683. Residues S727, S842, S933, and S934 each carry the phosphoserine modification. The tract at residues 819-956 (EKADVAVESL…SLLLVDQLID (138 aa)) is clathrin-binding domain (CBD). 2 disordered regions span residues 832–855 (LEPP…TDSL) and 919–941 (VLIT…ESSL). The span at 840 to 855 (LPSQTESVTSNRTDSL) shows a compositional bias: polar residues. Residues 927-940 (GGHSRNSSGSSESS) are compositionally biased toward low complexity.

It belongs to the protein kinase superfamily. Ser/Thr protein kinase family. Interacts (via CBD domain) with clathrin. Interacts with AP-2 complex. Interacts with NUMB. Interacts with alpha-adaptin. Interacts with EPS15 isoform 2. Interacts with membrane-bound activated NOTCH1 but not with the inactive full-length form of NOTCH1. Preferentially interacts with monoubiquitinated activated NOTCH1 compared to the non-ubiquitinated form. Post-translationally, autophosphorylated. In terms of tissue distribution, detected in brain (at protein level).

Its subcellular location is the cell membrane. It localises to the membrane. It is found in the clathrin-coated pit. The protein resides in the presynapse. It carries out the reaction L-seryl-[protein] + ATP = O-phospho-L-seryl-[protein] + ADP + H(+). It catalyses the reaction L-threonyl-[protein] + ATP = O-phospho-L-threonyl-[protein] + ADP + H(+). Stimulated by clathrin. Its function is as follows. Regulates clathrin-mediated endocytosis by phosphorylating the AP2M1/mu2 subunit of the adaptor protein complex 2 (AP-2) which ensures high affinity binding of AP-2 to cargo membrane proteins during the initial stages of endocytosis. Preferentially, may phosphorylate substrates on threonine residues. Regulates phosphorylation of other AP-2 subunits as well as AP-2 localization and AP-2-mediated internalization of ligand complexes. Phosphorylates NUMB and regulates its cellular localization, promoting NUMB localization to endosomes. Binds to and stabilizes the activated form of NOTCH1, increases its localization in endosomes and regulates its transcriptional activity. In Bos taurus (Bovine), this protein is AP2-associated protein kinase 1 (AAK1).